The following is a 500-amino-acid chain: Cytochrome P450 2D16 (500 aa).

Serine 249 carries the phosphoserine modification. Residue cysteine 446 participates in heme binding.

The protein belongs to the cytochrome P450 family. The cofactor is heme. As to expression, expressed at high levels in the inner zone of the adrenal cortex.

Its subcellular location is the endoplasmic reticulum membrane. The protein resides in the microsome membrane. It catalyses the reaction an organic molecule + reduced [NADPH--hemoprotein reductase] + O2 = an alcohol + oxidized [NADPH--hemoprotein reductase] + H2O + H(+). Its function is as follows. Cytochromes P450 are a group of heme-thiolate monooxygenases. In liver microsomes, this enzyme is involved in an NADPH-dependent electron transport pathway. It oxidizes a variety of structurally unrelated compounds, including steroids, fatty acids, and xenobiotics. This chain is Cytochrome P450 2D16 (CYP2D16), found in Cavia porcellus (Guinea pig).